We begin with the raw amino-acid sequence, 250 residues long: tRNA (guanine-N(1)-)-methyltransferase (250 aa).

S-adenosyl-L-methionine-binding positions include Gly115 and 135 to 140 (LGDFVL).

Belongs to the RNA methyltransferase TrmD family. In terms of assembly, homodimer.

It localises to the cytoplasm. The enzyme catalyses guanosine(37) in tRNA + S-adenosyl-L-methionine = N(1)-methylguanosine(37) in tRNA + S-adenosyl-L-homocysteine + H(+). In terms of biological role, specifically methylates guanosine-37 in various tRNAs. The protein is tRNA (guanine-N(1)-)-methyltransferase of Legionella pneumophila (strain Paris).